Consider the following 426-residue polypeptide: Histidine--tRNA ligase (426 aa).

This sequence belongs to the class-II aminoacyl-tRNA synthetase family. In terms of assembly, homodimer.

The protein resides in the cytoplasm. The catalysed reaction is tRNA(His) + L-histidine + ATP = L-histidyl-tRNA(His) + AMP + diphosphate + H(+). In Streptococcus sanguinis (strain SK36), this protein is Histidine--tRNA ligase.